Here is a 964-residue protein sequence, read N- to C-terminus: MILEKPSWIRHEGLQIFSIDIQTGGLRFATGGGDQKVRIWSMESVHKDNTNNDSKQRLLATLRDHFGSVNCVRWAKHGRYLASGSDDQVILIHERKAGSGTSEFGSGEPPDAENWKVIMTWRGHTADVVDLSWSPDDSTLASGSLDNTIHIWNMNNGICTAVLRGHTSLVKGVTWDPIGSFIASQSDDKTVMIWRTSDWSLAHKTEGHWTKSLGSTFFRRLAWSPCCHFITTTHGFQKPRHSAPVLERGEWAATFDFLGHNAPIVVVKFNNSTFRKNFSSDQDPKAAPVGWANGASKTPTKEQQPYNVIAIGSQDRTITVWTTASARPLFVARHFFSQSVVDLSWSPDGYSLFACSLDGSAANFHFEVKELGHRLSDSEMDEWKRNRYGDVGGRQSNLAESPAQLLLEQASAKQSAGEKVTSIVEQGKAPPKVSAGVPNPGLVVLSLEVPEVSHEDSKKTAGPTADDVKKGNQLSSPVKQREYRRPDGRKRIIPEAVGFASNQDNIPNHSQNHPVNFSSLDQRMNGTKPSYGSNSNSNNCGVKDRTSVTARANITESLVIQKASAGAGNDGRLSIEHTRSMAPSSLTPCSALSIHVINKNGNEDALPVCLEARPVERGAGDMIGVGALSTKETEIKCIKGTKTLWSDRISGKVTVLAGNANFWAVGCEDGFLQVYTRCGVRAMPAMMMGSAAVFIDCDDSWKLLLVTGRGLMYIWNLYDRACILHDSLASLVASPDESSAKDAGTVKVISATFSRCGSPLVALASRHAFLYDMSLKCWLRIADDCFPASNFASSFSFPQGGELGKLQIDIGKFMARKPIWSRVTDDGLQTRAHLENQLASSLALKSAQEYRQCLLSYVRFLAREADESRLREVCESFLGPPMGKVGSASPTDPKNLAWDPDVLGMKKHKLLKEDILPSMASNRKVQRLLNEFMDLLLEYETDVTLIPQPGTEGNGNGNDKVMTS.

6 WD repeats span residues 10–50, 64–103, 123–162, 165–204, 259–331, and 335–376; these read RHEG…KDNT, DHFG…GTSE, GHTA…CTAV, GHTS…LAHK, GHNA…PLFV, and FFSQ…HRLS. The segment at 453–490 is disordered; it reads SHEDSKKTAGPTADDVKKGNQLSSPVKQREYRRPDGRK. A compositionally biased stretch (basic and acidic residues) spans 479–490; it reads KQREYRRPDGRK. The WD 7 repeat unit spans residues 644–685; that stretch reads LWSDRISGKVTVLAGNANFWAVGCEDGFLQVYTRCGVRAMPA. Residues 920–940 are a coiled coil; it reads ASNRKVQRLLNEFMDLLLEYE.

Belongs to the WD repeat HIR1 family. Interacts with RS2. In terms of tissue distribution, more abundant in apices and young leaf primordia than in fully expanded leaf tissues.

It is found in the nucleus. Its function is as follows. Histone chaperone involved in maintining knox genes silencing throughout leaf development. The sequence is that of Protein HIRA from Zea mays (Maize).